The primary structure comprises 202 residues: GTP cyclohydrolase 1 (202 aa).

3 residues coordinate Zn(2+): Cys90, His93, and Cys163.

Belongs to the GTP cyclohydrolase I family. In terms of assembly, homomer.

The enzyme catalyses GTP + H2O = 7,8-dihydroneopterin 3'-triphosphate + formate + H(+). Its pathway is cofactor biosynthesis; 7,8-dihydroneopterin triphosphate biosynthesis; 7,8-dihydroneopterin triphosphate from GTP: step 1/1. The protein is GTP cyclohydrolase 1 of Mycobacterium ulcerans (strain Agy99).